Here is an 847-residue protein sequence, read N- to C-terminus: Receptor-like protein 12 (847 aa).

Residues 1–27 form the signal peptide; it reads MMIRSHRHWVFSSRIIIFLSLLVHSLA. Residues 28 to 798 lie on the Extracellular side of the membrane; it reads SSSPHFCRDD…LSEAEENMFN (771 aa). Residues Asn-52, Asn-66, Asn-103, and Asn-132 are each glycosylated (N-linked (GlcNAc...) asparagine). LRR repeat units follow at residues 109–133, 135–157, 158–181, 183–205, 206–229, 231–253, 254–277, 279–301, 302–325, 326–350, 351–374, 375–398, 400–422, 424–442, 443–466, 467–491, 492–514, 516–539, 541–562, 563–587, 589–613, 657–681, 682–704, 705–729, and 731–754; these read LQYLRHLDLTNCNLYGEIPSSLGNL, HLTLVNLYFNKFVGEIPASIGNL, NQLRHLILANNVLTGEIPSSLGNL, RLVNLELFSNRLVGKIPDSIGDL, KQLRNLSLASNNLIGEIPSSLGNL, NLVHLVLTHNQLVGEVPASIGNL, IELRVMSFENNSLSGNIPISFANL, KLSIFVLSSNNFTSTFPFDMSIF, HNLEYFDVSYNSFSGPFPKSLLLI, PSLESIYLQENQFTGPIEFANTSSS, TKLQDLILGRNRLHGPIPESISRL, LNLEELDISHNNFTGAIPPTISKL, NLLHLDLSKNNLEGEVPACLWRL, TMVLSHNSFSSFENTSQEE, ALIEELDLNSNSFQGPIPYMICKL, SSLGFLDLSNNLFSGSIPSCIRNFS, GSIKELNLGDNNFSGTLPDIFSK, TELVSLDVSHNQLEGKFPKSLINC, ALELVNVESNKIKDIFPSWLES, LPSLHVLNLRSNKFYGPLYHRHASI, FQSLRIIDISHNNFSGTLPPYYFSN, RRDFRAIDFSGNKINGNIPESLGYL, KELRVLNLSGNAFTSVIPRFLAN, LTKLETLDISRNKLSGQIPQDLAAL, and FLSYMNFSHNLLQGPVPRGTQFQR. Asn-180 is a glycosylation site (N-linked (GlcNAc...) asparagine). Residues Asn-210 and Asn-228 are each glycosylated (N-linked (GlcNAc...) asparagine). Asn-263, Asn-276, and Asn-289 each carry an N-linked (GlcNAc...) asparagine glycan. An N-linked (GlcNAc...) asparagine glycan is attached at Asn-346. An N-linked (GlcNAc...) asparagine glycan is attached at Asn-386. N-linked (GlcNAc...) asparagine glycosylation is present at Asn-437. N-linked (GlcNAc...) asparagine glycosylation is found at Asn-489 and Asn-503. Asn-601 carries an N-linked (GlcNAc...) asparagine glycan. Residues Asn-688 and Asn-704 are each glycosylated (N-linked (GlcNAc...) asparagine). Asn-736 carries N-linked (GlcNAc...) asparagine glycosylation. The chain crosses the membrane as a helical span at residues 799–819; sequence WVAAAIAYGPGVLCGLVIGHF. At 820–847 the chain is on the cytoplasmic side; it reads YTSHNHEWFTEKFGRKQHKALTSVKCSL.

Belongs to the RLP family.

It is found in the cell membrane. Its function is as follows. Involved in the perception of CLV3 and CLV3-like peptides, that act as extracellular signals regulating meristems maintenance. The chain is Receptor-like protein 12 from Arabidopsis thaliana (Mouse-ear cress).